Reading from the N-terminus, the 326-residue chain is 4-hydroxy-3-methylbut-2-enyl diphosphate reductase 1 (326 aa).

C27 lines the [4Fe-4S] cluster pocket. (2E)-4-hydroxy-3-methylbut-2-enyl diphosphate-binding residues include H56 and H89. Residues H56 and H89 each contribute to the dimethylallyl diphosphate site. H56 and H89 together coordinate isopentenyl diphosphate. A [4Fe-4S] cluster-binding site is contributed by C111. H139 serves as a coordination point for (2E)-4-hydroxy-3-methylbut-2-enyl diphosphate. A dimethylallyl diphosphate-binding site is contributed by H139. H139 is a binding site for isopentenyl diphosphate. E141 acts as the Proton donor in catalysis. (2E)-4-hydroxy-3-methylbut-2-enyl diphosphate is bound at residue T179. C209 lines the [4Fe-4S] cluster pocket. S237, S238, N239, and S281 together coordinate (2E)-4-hydroxy-3-methylbut-2-enyl diphosphate. S237, S238, N239, and S281 together coordinate dimethylallyl diphosphate. Residues S237, S238, N239, and S281 each coordinate isopentenyl diphosphate.

Belongs to the IspH family. It depends on [4Fe-4S] cluster as a cofactor.

It catalyses the reaction isopentenyl diphosphate + 2 oxidized [2Fe-2S]-[ferredoxin] + H2O = (2E)-4-hydroxy-3-methylbut-2-enyl diphosphate + 2 reduced [2Fe-2S]-[ferredoxin] + 2 H(+). The enzyme catalyses dimethylallyl diphosphate + 2 oxidized [2Fe-2S]-[ferredoxin] + H2O = (2E)-4-hydroxy-3-methylbut-2-enyl diphosphate + 2 reduced [2Fe-2S]-[ferredoxin] + 2 H(+). Its pathway is isoprenoid biosynthesis; dimethylallyl diphosphate biosynthesis; dimethylallyl diphosphate from (2E)-4-hydroxy-3-methylbutenyl diphosphate: step 1/1. It functions in the pathway isoprenoid biosynthesis; isopentenyl diphosphate biosynthesis via DXP pathway; isopentenyl diphosphate from 1-deoxy-D-xylulose 5-phosphate: step 6/6. Its function is as follows. Catalyzes the conversion of 1-hydroxy-2-methyl-2-(E)-butenyl 4-diphosphate (HMBPP) into a mixture of isopentenyl diphosphate (IPP) and dimethylallyl diphosphate (DMAPP). Acts in the terminal step of the DOXP/MEP pathway for isoprenoid precursor biosynthesis. The sequence is that of 4-hydroxy-3-methylbut-2-enyl diphosphate reductase 1 from Burkholderia pseudomallei (strain K96243).